The chain runs to 614 residues: Vitamin B12 transporter BtuB (614 aa).

The signal sequence occupies residues methionine 1 to alanine 20. The short motif at aspartate 26–asparagine 33 is the TonB box element. The 115-residue stretch at proline 38 to threonine 152 folds into the TBDR plug domain. Residues leucine 83, serine 85, asparagine 92, and valine 110–serine 111 each bind cyanocob(III)alamin. A TBDR beta-barrel domain is found at glutamate 155–phenylalanine 614. Transmembrane regions (beta stranded) follow at residues threonine 158–glycine 165, tyrosine 169–glutamine 178, and threonine 184–threonine 195. Ca(2+) is bound by residues aspartate 199, glutamine 211, aspartate 213, and aspartate 215. 2 beta stranded membrane passes run phenylalanine 217–glutamate 227 and aspartate 232–asparagine 248. Ca(2+) contacts are provided by tyrosine 249 and aspartate 250. Residue alanine 251 coordinates cyanocob(III)alamin. Aspartate 261 provides a ligand contact to Ca(2+). 14 beta stranded membrane passes run arginine 263 to asparagine 277, glutamate 279 to asparagine 296, threonine 309 to isoleucine 325, histidine 328 to tryptophan 337, tyrosine 353 to glycine 369, phenylalanine 371 to aspartate 381, phenylalanine 385 to isoleucine 400, tyrosine 403 to asparagine 417, lysine 434 to glutamate 443, valine 449 to asparagine 458, tyrosine 473 to phenylalanine 490, proline 494 to alanine 509, arginine 517 to tryptophan 529, and aspartate 535 to aspartate 550. Threonine 309 lines the cyanocob(III)alamin pocket. A cyanocob(III)alamin-binding site is contributed by arginine 517. Residue tyrosine 551 coordinates cyanocob(III)alamin. A run of 3 beta stranded transmembrane segments spans residues threonine 558–alanine 572, isoleucine 585–valine 596, and alanine 602–phenylalanine 614. A TonB C-terminal box motif is present at residues tyrosine 597 to phenylalanine 614.

It belongs to the TonB-dependent receptor family. BtuB (TC 1.B.14.3.1) subfamily.

Its subcellular location is the cell outer membrane. Involved in the active translocation of vitamin B12 (cyanocobalamin) across the outer membrane to the periplasmic space. It derives its energy for transport by interacting with the trans-periplasmic membrane protein TonB. The polypeptide is Vitamin B12 transporter BtuB (Escherichia coli O9:H4 (strain HS)).